We begin with the raw amino-acid sequence, 303 residues long: tRNA pseudouridine synthase B (303 aa).

The active-site Nucleophile is aspartate 38.

It belongs to the pseudouridine synthase TruB family. Type 1 subfamily.

The catalysed reaction is uridine(55) in tRNA = pseudouridine(55) in tRNA. In terms of biological role, responsible for synthesis of pseudouridine from uracil-55 in the psi GC loop of transfer RNAs. The chain is tRNA pseudouridine synthase B from Levilactobacillus brevis (strain ATCC 367 / BCRC 12310 / CIP 105137 / JCM 1170 / LMG 11437 / NCIMB 947 / NCTC 947) (Lactobacillus brevis).